A 137-amino-acid polypeptide reads, in one-letter code: Large ribosomal subunit protein uL16 (137 aa).

It belongs to the universal ribosomal protein uL16 family. Part of the 50S ribosomal subunit.

Binds 23S rRNA and is also seen to make contacts with the A and possibly P site tRNAs. In Mesoplasma florum (strain ATCC 33453 / NBRC 100688 / NCTC 11704 / L1) (Acholeplasma florum), this protein is Large ribosomal subunit protein uL16.